A 505-amino-acid chain; its full sequence is Maturase K (505 aa).

This sequence belongs to the intron maturase 2 family. MatK subfamily.

It is found in the plastid. It localises to the chloroplast. In terms of biological role, usually encoded in the trnK tRNA gene intron. Probably assists in splicing its own and other chloroplast group II introns. The protein is Maturase K of Apocynum androsaemifolium (Spreading dogbane).